Here is a 185-residue protein sequence, read N- to C-terminus: Elongation factor P (185 aa).

This sequence belongs to the elongation factor P family.

Its subcellular location is the cytoplasm. Its pathway is protein biosynthesis; polypeptide chain elongation. Involved in peptide bond synthesis. Stimulates efficient translation and peptide-bond synthesis on native or reconstituted 70S ribosomes in vitro. Probably functions indirectly by altering the affinity of the ribosome for aminoacyl-tRNA, thus increasing their reactivity as acceptors for peptidyl transferase. This chain is Elongation factor P, found in Caldicellulosiruptor bescii (strain ATCC BAA-1888 / DSM 6725 / KCTC 15123 / Z-1320) (Anaerocellum thermophilum).